A 316-amino-acid polypeptide reads, in one-letter code: uncharacterized protein (316 aa).

Residues 12-34 form a helical membrane-spanning segment; it reads RWVCLTSVILFCFCIAVMRYGGV.

The protein resides in the membrane. This is an uncharacterized protein from Treponema pallidum (strain Nichols).